The following is a 289-amino-acid chain: MDGILNINKPEGMTSFDVVRKVRFMLKNEKVGHTGTLDPMASGVLPICVGRATKFADYMVESKKIYLAELRLGITTETYDREGSVVNTRGVYLKKKDIIEEILSFQGEIEQVPPMYSALKVNGRRLYELARKGIEIERKKRKITIYSIDIVNIELPYVSFKVTCSKGTYIRSLCNDIGNNLNCGGTMWNLKRLSTGNFNIADSIALEYLDSENILKYIIPIDKALYGYPEVLVEDEYVKKILNGISIKDESFLSKTIKDKLYRVYIEGNKFIGIGMNKDFQFKMVKLFV.

Asp-38 acts as the Nucleophile in catalysis.

Belongs to the pseudouridine synthase TruB family. Type 1 subfamily.

It catalyses the reaction uridine(55) in tRNA = pseudouridine(55) in tRNA. Functionally, responsible for synthesis of pseudouridine from uracil-55 in the psi GC loop of transfer RNAs. The polypeptide is tRNA pseudouridine synthase B (Clostridium kluyveri (strain ATCC 8527 / DSM 555 / NBRC 12016 / NCIMB 10680 / K1)).